The primary structure comprises 149 residues: Deoxyuridine 5'-triphosphate nucleotidohydrolase (149 aa).

Residues 68–70 (RSG), asparagine 81, and 85–87 (LID) contribute to the substrate site.

This sequence belongs to the dUTPase family. Mg(2+) is required as a cofactor.

The catalysed reaction is dUTP + H2O = dUMP + diphosphate + H(+). The protein operates within pyrimidine metabolism; dUMP biosynthesis; dUMP from dCTP (dUTP route): step 2/2. Functionally, this enzyme is involved in nucleotide metabolism: it produces dUMP, the immediate precursor of thymidine nucleotides and it decreases the intracellular concentration of dUTP so that uracil cannot be incorporated into DNA. This Nitrosomonas eutropha (strain DSM 101675 / C91 / Nm57) protein is Deoxyuridine 5'-triphosphate nucleotidohydrolase.